The chain runs to 363 residues: NAD(P)H-quinone oxidoreductase subunit 1, chloroplastic (363 aa).

7 helical membrane-spanning segments follow: residues 30 to 50 (FIPI…IVWL), 104 to 124 (IAVI…HLVL), 129 to 149 (IGVF…LMSG), 248 to 268 (YSGI…LVSS), 269 to 289 (LFVT…IFVF), 300 to 320 (VFEP…FLFI), and 336 to 356 (LLNL…LLTT).

Belongs to the complex I subunit 1 family. NDH is composed of at least 16 different subunits, 5 of which are encoded in the nucleus.

It localises to the plastid. It is found in the chloroplast thylakoid membrane. The catalysed reaction is a plastoquinone + NADH + (n+1) H(+)(in) = a plastoquinol + NAD(+) + n H(+)(out). It catalyses the reaction a plastoquinone + NADPH + (n+1) H(+)(in) = a plastoquinol + NADP(+) + n H(+)(out). Its function is as follows. NDH shuttles electrons from NAD(P)H:plastoquinone, via FMN and iron-sulfur (Fe-S) centers, to quinones in the photosynthetic chain and possibly in a chloroplast respiratory chain. The immediate electron acceptor for the enzyme in this species is believed to be plastoquinone. Couples the redox reaction to proton translocation, and thus conserves the redox energy in a proton gradient. The protein is NAD(P)H-quinone oxidoreductase subunit 1, chloroplastic of Morus indica (Mulberry).